The chain runs to 20 residues: Pregnancy-associated glycoprotein 75 (20 aa).

The protein belongs to the peptidase A1 family. Post-translationally, N-glycosylated. In terms of tissue distribution, expressed in chorionic epithelium (trophectoderm).

It is found in the secreted. This Bubalus bubalis (Domestic water buffalo) protein is Pregnancy-associated glycoprotein 75.